The following is a 217-amino-acid chain: Adenylate kinase (217 aa).

10–15 (GAGKGT) serves as a coordination point for ATP. The segment at 30–59 (STGDMFREAVAAGTELGVKVQNILSSGALV) is NMP. AMP is bound by residues T31, R36, 57–59 (ALV), 85–88 (GYPR), and Q92. The interval 126–163 (SRRICPKCGKIYNLISMPPVSDQICDDCGEQLVIREDD) is LID. R127 is an ATP binding site. Positions 130 and 133 each coordinate Zn(2+). 136–137 (IY) serves as a coordination point for ATP. C150 and C153 together coordinate Zn(2+). AMP contacts are provided by R160 and R171. An ATP-binding site is contributed by R199.

It belongs to the adenylate kinase family. As to quaternary structure, monomer.

The protein localises to the cytoplasm. It catalyses the reaction AMP + ATP = 2 ADP. Its pathway is purine metabolism; AMP biosynthesis via salvage pathway; AMP from ADP: step 1/1. Catalyzes the reversible transfer of the terminal phosphate group between ATP and AMP. Plays an important role in cellular energy homeostasis and in adenine nucleotide metabolism. The chain is Adenylate kinase from Pseudothermotoga lettingae (strain ATCC BAA-301 / DSM 14385 / NBRC 107922 / TMO) (Thermotoga lettingae).